Consider the following 716-residue polypeptide: Zinc finger CCCH domain-containing protein 30 (716 aa).

ANK repeat units follow at residues 90-120 (DYRT…DVNR) and 125-157 (DQTT…DLNL). The segment at 201–231 (VTNVPNRSSSPCHSPTGENGGSGSGSPLGSP) is disordered. The segment covering 203-213 (NVPNRSSSPCH) has biased composition (polar residues). 2 C3H1-type zinc fingers span residues 306-328 (PCPD…HGVF) and 336-360 (QYRT…HTPE). The tract at residues 521–562 (FQQQQQQQQSMLSPINTSFSSPKSVDHSLFSGGGRMSPRNVV) is disordered. Polar residues predominate over residues 530-543 (SMLSPINTSFSSPK). Serine 566 bears the Phosphoserine mark. The segment covering 583 to 594 (QQQQQQQQQQHQ) has biased composition (low complexity). Disordered stretches follow at residues 583-638 (QQQQ…MSSE) and 667-692 (PAEA…PVEP). Residues 605 to 630 (TNSSPIVGSPVNNNTWSSKWGSSNGQ) are compositionally biased toward polar residues.

The chain is Zinc finger CCCH domain-containing protein 30 from Arabidopsis thaliana (Mouse-ear cress).